Consider the following 334-residue polypeptide: Ribonucleoside-diphosphate reductase small chain (334 aa).

Residues Asp77, Glu108, and His111 each contribute to the Fe cation site. Residue Tyr115 is part of the active site. Residues Glu171, Glu205, and His208 each contribute to the Fe cation site.

The protein belongs to the ribonucleoside diphosphate reductase small chain family. As to quaternary structure, heterotetramer composed of a homodimer of the large subunit (R1) and a homodimer of the small subunit (R2). Larger multisubunit protein complex are also active, composed of (R1)n(R2)n. Requires Fe cation as cofactor.

The catalysed reaction is a 2'-deoxyribonucleoside 5'-diphosphate + [thioredoxin]-disulfide + H2O = a ribonucleoside 5'-diphosphate + [thioredoxin]-dithiol. Its function is as follows. Ribonucleoside-diphosphate reductase holoenzyme provides the precursors necessary for viral DNA synthesis. Allows virus growth in non-dividing cells. Catalyzes the biosynthesis of deoxyribonucleotides from the corresponding ribonucleotides. This Ornithodoros (relapsing fever ticks) protein is Ribonucleoside-diphosphate reductase small chain.